We begin with the raw amino-acid sequence, 244 residues long: Type III pantothenate kinase (244 aa).

7–14 (DIGNTRLK) is an ATP binding site. Substrate-binding positions include Y95 and 102-105 (GIDR). D104 acts as the Proton acceptor in catalysis. ATP is bound at residue T126. Position 177 (T177) interacts with substrate.

The protein belongs to the type III pantothenate kinase family. As to quaternary structure, homodimer. It depends on NH4(+) as a cofactor. K(+) serves as cofactor.

It localises to the cytoplasm. It catalyses the reaction (R)-pantothenate + ATP = (R)-4'-phosphopantothenate + ADP + H(+). It functions in the pathway cofactor biosynthesis; coenzyme A biosynthesis; CoA from (R)-pantothenate: step 1/5. In terms of biological role, catalyzes the phosphorylation of pantothenate (Pan), the first step in CoA biosynthesis. This Acinetobacter baumannii (strain ACICU) protein is Type III pantothenate kinase.